Here is a 204-residue protein sequence, read N- to C-terminus: Phosphatidylserine decarboxylase proenzyme (204 aa).

The active-site Schiff-base intermediate with substrate; via pyruvic acid is the serine 169. Serine 169 is modified (pyruvic acid (Ser); by autocatalysis).

This sequence belongs to the phosphatidylserine decarboxylase family. PSD-A subfamily. In terms of assembly, heterodimer of a large membrane-associated beta subunit and a small pyruvoyl-containing alpha subunit. Requires pyruvate as cofactor. Is synthesized initially as an inactive proenzyme. Formation of the active enzyme involves a self-maturation process in which the active site pyruvoyl group is generated from an internal serine residue via an autocatalytic post-translational modification. Two non-identical subunits are generated from the proenzyme in this reaction, and the pyruvate is formed at the N-terminus of the alpha chain, which is derived from the carboxyl end of the proenzyme. The post-translation cleavage follows an unusual pathway, termed non-hydrolytic serinolysis, in which the side chain hydroxyl group of the serine supplies its oxygen atom to form the C-terminus of the beta chain, while the remainder of the serine residue undergoes an oxidative deamination to produce ammonia and the pyruvoyl prosthetic group on the alpha chain.

The protein resides in the cell membrane. The catalysed reaction is a 1,2-diacyl-sn-glycero-3-phospho-L-serine + H(+) = a 1,2-diacyl-sn-glycero-3-phosphoethanolamine + CO2. The protein operates within phospholipid metabolism; phosphatidylethanolamine biosynthesis; phosphatidylethanolamine from CDP-diacylglycerol: step 2/2. In terms of biological role, catalyzes the formation of phosphatidylethanolamine (PtdEtn) from phosphatidylserine (PtdSer). The protein is Phosphatidylserine decarboxylase proenzyme of Solibacter usitatus (strain Ellin6076).